We begin with the raw amino-acid sequence, 544 residues long: CTP synthase (544 aa).

The interval 1–266 (MIRYIFITGG…DSEVLSHFGI (266 aa)) is amidoligase domain. Ser13 lines the CTP pocket. Residue Ser13 participates in UTP binding. ATP-binding positions include 14 to 19 (SLGKGI) and Asp71. 2 residues coordinate Mg(2+): Asp71 and Glu140. Residues 147–149 (DIE), 187–192 (KTKPTQ), and Lys223 contribute to the CTP site. UTP is bound by residues 187–192 (KTKPTQ) and Lys223. 239–241 (RDV) is a binding site for ATP. Residues 292–543 (TIGLVGKYTD…IAAAVKQSRL (252 aa)) enclose the Glutamine amidotransferase type-1 domain. Gly355 is a binding site for L-glutamine. Cys382 serves as the catalytic Nucleophile; for glutamine hydrolysis. L-glutamine-binding positions include 383 to 386 (YGMQ), Glu406, and Arg471. Residues His516 and Glu518 contribute to the active site.

Belongs to the CTP synthase family. In terms of assembly, homotetramer.

The catalysed reaction is UTP + L-glutamine + ATP + H2O = CTP + L-glutamate + ADP + phosphate + 2 H(+). It catalyses the reaction L-glutamine + H2O = L-glutamate + NH4(+). It carries out the reaction UTP + NH4(+) + ATP = CTP + ADP + phosphate + 2 H(+). Its pathway is pyrimidine metabolism; CTP biosynthesis via de novo pathway; CTP from UDP: step 2/2. Allosterically activated by GTP, when glutamine is the substrate; GTP has no effect on the reaction when ammonia is the substrate. The allosteric effector GTP functions by stabilizing the protein conformation that binds the tetrahedral intermediate(s) formed during glutamine hydrolysis. Inhibited by the product CTP, via allosteric rather than competitive inhibition. In terms of biological role, catalyzes the ATP-dependent amination of UTP to CTP with either L-glutamine or ammonia as the source of nitrogen. Regulates intracellular CTP levels through interactions with the four ribonucleotide triphosphates. The polypeptide is CTP synthase (Hyphomonas neptunium (strain ATCC 15444)).